We begin with the raw amino-acid sequence, 200 residues long: Mediator of RNA polymerase II transcription subunit 29 (200 aa).

Composition is skewed to low complexity over residues 1–21 and 36–48; these read MAASQQQASAASSAAGVSGPS and AQLVGPAQSGLLQ. The tract at residues 1–48 is disordered; it reads MAASQQQASAASSAAGVSGPSSAGGPGPQQQPQPPAQLVGPAQSGLLQ. At alanine 2 the chain carries N-acetylalanine.

This sequence belongs to the Mediator complex subunit 29 family. In terms of assembly, component of the Mediator complex, which is composed of MED1, MED4, MED6, MED7, MED8, MED9, MED10, MED11, MED12, MED13, MED13L, MED14, MED15, MED16, MED17, MED18, MED19, MED20, MED21, MED22, MED23, MED24, MED25, MED26, MED27, MED29, MED30, MED31, CCNC, CDK8 and CDC2L6/CDK11. The MED12, MED13, CCNC and CDK8 subunits form a distinct module termed the CDK8 module. Mediator containing the CDK8 module is less active than Mediator lacking this module in supporting transcriptional activation. Individual preparations of the Mediator complex lacking one or more distinct subunits have been variously termed ARC, CRSP, DRIP, PC2, SMCC and TRAP. Associates with the MED18/MED20 heteromer.

It is found in the nucleus. In terms of biological role, component of the Mediator complex, a coactivator involved in the regulated transcription of nearly all RNA polymerase II-dependent genes. Mediator functions as a bridge to convey information from gene-specific regulatory proteins to the basal RNA polymerase II transcription machinery. Mediator is recruited to promoters by direct interactions with regulatory proteins and serves as a scaffold for the assembly of a functional preinitiation complex with RNA polymerase II and the general transcription factors. In Pongo abelii (Sumatran orangutan), this protein is Mediator of RNA polymerase II transcription subunit 29 (MED29).